A 558-amino-acid polypeptide reads, in one-letter code: MDIKRTVLWVIFFMSAVMLFDNWQRSHGRPSMFFPNVTQTNTASNATNGNGASGANAAAAANALPAAATGAAPATTAPAAQAQLVRFSTDVYNGEIDTRGGTLAKLTLTKAGDGKQPDLSVTLFDHTANHTYLARTGLLGGDFPNHNDVYAQVAGPTSLAADQNTLKLSFESPVKGGVKVVKTYTFTRGSYVIGVDTKIENVGAAPVTPSVYMELVRDNSSVETPMFSHTFLGPAVYTDQKHFQKITFGDIDKNKADYVTSADNGWIAMVQHYFASAWIPQSGAKRDIYVEKIDPTLYRVGVKQPVAAIAPGQSADVSARLFAGPEEERMLEGIAPGLELVKDYGWVTIIAKPLFWLLEKIHGFVGNWGWAIVLLTLLIKAVFFPLSAASYKSMARMKEITPRMQALRERFKSDPQKMNAALMELYKTEKVNPFGGCLPVVIQIPVFISLYWVLLASVEMRGAPWVLWIHDLSQRDPYFILPVLMAVSMFVQTKLNPTPPDPVQAKMMMFMPIAFSVMFFFFPAGLVLYYVVNNVLSIAQQYYITRTLGGAAAKKKAS.

Transmembrane regions (helical) follow at residues 3–23 (IKRT…FDNW), 364–384 (FVGN…AVFF), 438–458 (LPVV…LASV), 477–497 (PYFI…KLNP), and 508–528 (MMFM…GLVL).

It belongs to the OXA1/ALB3/YidC family. Type 1 subfamily. Interacts with the Sec translocase complex via SecD. Specifically interacts with transmembrane segments of nascent integral membrane proteins during membrane integration.

Its subcellular location is the cell inner membrane. Its function is as follows. Required for the insertion and/or proper folding and/or complex formation of integral membrane proteins into the membrane. Involved in integration of membrane proteins that insert both dependently and independently of the Sec translocase complex, as well as at least some lipoproteins. Aids folding of multispanning membrane proteins. The polypeptide is Membrane protein insertase YidC (Burkholderia pseudomallei (strain 668)).